The chain runs to 572 residues: FAD-linked oxidoreductase patO (572 aa).

The N-terminal stretch at M1–G23 is a signal peptide. N-linked (GlcNAc...) asparagine glycosylation is found at N48, N71, N126, N180, N309, N354, N381, N422, N446, and N481. One can recognise an FAD-binding PCMH-type domain in the interval C115–D295.

The protein belongs to the oxygen-dependent FAD-linked oxidoreductase family. Requires FAD as cofactor.

Its subcellular location is the vacuole lumen. It functions in the pathway mycotoxin biosynthesis; patulin biosynthesis. Functionally, FAD-linked oxidoreductase; part of the gene cluster that mediates the biosynthesis of patulin, an acetate-derived tetraketide mycotoxin produced by several fungal species that shows antimicrobial properties against several bacteria. PatO acts with patJ in the vacuole to convert gentisyl alcohol to isoepoxydon. The pathway begins with the synthesis of 6-methylsalicylic acid by the polyketide synthase (PKS) patK via condensation of acetate and malonate units. The 6-methylsalicylic acid decarboxylase patG then catalyzes the decarboxylation of 6-methylsalicylic acid to yield m-cresol (also known as 3-methylphenol). These first reactions occur in the cytosol. The intermediate m-cresol is then transported into the endoplasmic reticulum where the cytochrome P450 monooxygenase patH converts it to m-hydroxybenzyl alcohol, which is further converted to gentisyl alcohol by the cytochrome P450 monooxygenase patI. The oxidoreductases patJ and patO further convert gentisyl alcohol to isoepoxydon in the vacuole. PatN catalyzes then the transformation of isoepoxydon into phyllostine. The cluster protein patF is responsible for the conversion from phyllostine to neopatulin whereas the alcohol dehydrogenase patD converts neopatulin to E-ascladiol. The steps between isoepoxydon and E-ascladiol occur in the cytosol, and E-ascladiol is probably secreted to the extracellular space by one of the cluster-specific transporters patC or patM. Finally, the secreted patulin synthase patE catalyzes the conversion of E-ascladiol to patulin. The sequence is that of FAD-linked oxidoreductase patO from Aspergillus clavatus (strain ATCC 1007 / CBS 513.65 / DSM 816 / NCTC 3887 / NRRL 1 / QM 1276 / 107).